Reading from the N-terminus, the 539-residue chain is Phosphoenolpyruvate carboxykinase (ATP) (539 aa).

Residues Arg64, Tyr206, and Lys212 each coordinate substrate. ATP is bound by residues Lys212, His231, and Gly247–Thr255. Positions 212 and 231 each coordinate Mn(2+). Asp268 contributes to the Mn(2+) binding site. Residues Glu296, Arg332, Arg448–Ile449, and Thr454 contribute to the ATP site. Arg332 is a binding site for substrate.

This sequence belongs to the phosphoenolpyruvate carboxykinase (ATP) family. As to quaternary structure, monomer. It depends on Mn(2+) as a cofactor.

Its subcellular location is the cytoplasm. The enzyme catalyses oxaloacetate + ATP = phosphoenolpyruvate + ADP + CO2. It functions in the pathway carbohydrate biosynthesis; gluconeogenesis. Functionally, involved in the gluconeogenesis. Catalyzes the conversion of oxaloacetate (OAA) to phosphoenolpyruvate (PEP) through direct phosphoryl transfer between the nucleoside triphosphate and OAA. This is Phosphoenolpyruvate carboxykinase (ATP) from Yersinia pestis bv. Antiqua (strain Antiqua).